Consider the following 428-residue polypeptide: Gamma-glutamyl phosphate reductase (428 aa).

This sequence belongs to the gamma-glutamyl phosphate reductase family.

Its subcellular location is the cytoplasm. It carries out the reaction L-glutamate 5-semialdehyde + phosphate + NADP(+) = L-glutamyl 5-phosphate + NADPH + H(+). The protein operates within amino-acid biosynthesis; L-proline biosynthesis; L-glutamate 5-semialdehyde from L-glutamate: step 2/2. Catalyzes the NADPH-dependent reduction of L-glutamate 5-phosphate into L-glutamate 5-semialdehyde and phosphate. The product spontaneously undergoes cyclization to form 1-pyrroline-5-carboxylate. The chain is Gamma-glutamyl phosphate reductase from Afipia carboxidovorans (strain ATCC 49405 / DSM 1227 / KCTC 32145 / OM5) (Oligotropha carboxidovorans).